The following is a 312-amino-acid chain: Fibrinogen-like protein 1 (312 aa).

The first 22 residues, 1–22, serve as a signal peptide directing secretion; it reads MAKVFSFILVTTALTMGREISA. A coiled-coil region spans residues 23–61; it reads LEDCAQEQMRLRAQVRLLETRVKQQQVKIKQLLQENEVQ. In terms of domain architecture, Fibrinogen C-terminal spans 74 to 306; it reads LGSKRQYADC…SVVMKIRPND (233 aa). Cystine bridges form between C83–C112 and C248–C261.

In terms of assembly, homodimer. Interacts (via the Fibrinogen C-terminal domain) with LAG3 (via Ig-like domains 1 and 2). In terms of tissue distribution, under normal conditions, liver-specific.

It localises to the secreted. Immune suppressive molecule that inhibits antigen-specific T-cell activation by acting as a major ligand of LAG3. Responsible for LAG3 T-cell inhibitory function. Binds LAG3 independently from MHC class II (MHC-II). Secreted by, and promotes growth of, hepatocytes. This chain is Fibrinogen-like protein 1, found in Homo sapiens (Human).